The following is an 892-amino-acid chain: MEINHDYRVKLFDELGFERKQCTECNQWFWTLDKDRTTCGDSPCDEYSFIGNPITSKKYTYNEMVKEFTNFFDEKGHTPVKRSPVVAKRWRDDILLTIASIAVFQPWVTSGLVKPVKNPLVIAQPCIRLNDIDNVGRTGRHLTCFTMGAHHAFNSKDDYKYWTDKTVEYCFELMQRLGIDGKTITFIESWWEGGGNAGPCYEVITHGVELATLVFMQYKKIGNDYEEIPLKIVDTGYGIERFAWASQGTPTVYESLFSEIIEKLKEDAGIPEVDEKIMAESATLAGLMDIENVGDLRVLRQKVAEKIGMDVDELDKLISPLEYIYAIADHTRCLSFMFGDGIVPSNVKEGYLARLVLRKTLRYMEKIGISMSIKDIISMQLENMKEIYPELSAMKEYIMDVLDAEEKKYIQTVNRGRGIVERMAASKSEITLDDLIELYDSNGLPPEIVKDVVDDLNKKGKKTIAITVPDNFYTIVAERHEEEKPEEVVSTKKELPELEVSKTELLFFKHPTQVEFEAKVLKIVEKYVVLDKTLFYAEGGGQKYDIGQLNDIEVMDVQKKNGIVFHKVSDISKFKEGDTVKGAVNWDNRLKLMRNHTATHVINAAATRVLGKHVWQTGSNVDTEKGRLDITHYERISREQVKEIERIANEIVLSKMPVNSTFMDRNDAEQKYGFTIYQGGVVPGDTLRIIEIEGTDVEACGGTHCSNTSECGYIKVLKTERIQDGVERLEYSTGMGSVSEIASLEDTLIDSAEILGIPNDQLPKTVKRFFEEWKEQKKTIEELQKKVGELVKYELADKFENVGNYEVLVEQVSGTPNELMSIADNLAVGNKLIVLMNENDYLLCKRGENVELSMKDLIRNIGKGGGKDNLAQGKYSENKEQITEKIIQILNK.

His596, His600, Cys700, and His704 together coordinate Zn(2+).

The protein belongs to the class-II aminoacyl-tRNA synthetase family. The cofactor is Zn(2+).

It is found in the cytoplasm. The catalysed reaction is tRNA(Ala) + L-alanine + ATP = L-alanyl-tRNA(Ala) + AMP + diphosphate. Catalyzes the attachment of alanine to tRNA(Ala) in a two-step reaction: alanine is first activated by ATP to form Ala-AMP and then transferred to the acceptor end of tRNA(Ala). Also edits incorrectly charged Ser-tRNA(Ala) and Gly-tRNA(Ala) via its editing domain. The sequence is that of Alanine--tRNA ligase from Methanococcus maripaludis (strain DSM 14266 / JCM 13030 / NBRC 101832 / S2 / LL).